A 2167-amino-acid chain; its full sequence is SH3 and multiple ankyrin repeat domains protein 1 (2167 aa).

Residues 1–63 are disordered; that stretch reads MTHSPATSED…TRGLQGRSMS (63 aa). Low complexity predominate over residues 17 to 32; that stretch reads SECPEGGSESDSSPDG. Residues 33-47 show a composition bias toward gly residues; sequence PGRGPQGTRGRGSGA. Position 43 is an omega-N-methylarginine (arginine 43). Position 186 is a phosphotyrosine (tyrosine 186). ANK repeat units follow at residues 212-242, 246-275, 279-309, 313-342, 346-375, and 379-407; these read SGET…HIDF, DGMT…SPNY, RGLT…QLGI, NGWQ…EPGA, SGNT…NKDV, and NGQT…EQDV. 2 disordered regions span residues 413–432 and 454–546; these read SPKY…TVPP and PGAS…SRGR. A compositionally biased stretch (low complexity) spans 454–479; that stretch reads PGASSSGTPGPTSGSQGQSQPSAPST. Over residues 527–542 the composition is skewed to gly residues; it reads PAGGTGGSGGPGGSLG. Phosphoserine is present on serine 540. The residue at position 544 (arginine 544) is an Omega-N-methylarginine. One can recognise an SH3 domain in the interval 554–613; it reads VPGRSFMAVKSYQAQGEGEISLSKGEKIKVLSIGEGGFWEGQVKGRVGWFPSDCLEEVAN. Positions 663–757 constitute a PDZ domain; the sequence is TVLLQKKDSE…TLMVKVVMVT (95 aa). A phosphoserine mark is found at serine 671 and serine 791. Residues 841–894 are disordered; sequence ISASESPGPGGLASLGKHRPKGFFATESSFDPHHRSQPSYDRPSFLPPGPGLML. Serine 898 is subject to Phosphoserine. 2 disordered regions span residues 917–1233 and 1245–1290; these read SRSL…LDFT and RREG…RHSK. Pro residues predominate over residues 928–947; the sequence is IPPPPTTSPPEPPYSTPPAP. Arginine 958 is modified (omega-N-methylarginine). A compositionally biased stretch (low complexity) spans 969–980; that stretch reads PLPASSPSSFDG. Residues 1004 to 1028 are compositionally biased toward basic residues; it reads AHHHPPHHHHHHAPPPQPHHHHAHP. Arginine 1059 carries the omega-N-methylarginine modification. Residues 1064-1089 are compositionally biased toward low complexity; the sequence is SPTSGAPSPSHHSSSGGSSGPAQAPA. An omega-N-methylarginine mark is found at arginine 1098 and arginine 1109. 2 stretches are compositionally biased toward low complexity: residues 1132-1146 and 1171-1184; these read SLPP…ALPR and STSS…GSST. The span at 1203-1224 shows a compositional bias: pro residues; the sequence is SPAPATSPVPPSPSPVPTPASP. The segment covering 1245–1256 has biased composition (basic and acidic residues); it reads RREGGWQNEARR. Position 1257 is an asymmetric dimethylarginine (arginine 1257). Position 1291 is a phosphoserine (serine 1291). 8 disordered regions span residues 1308-1331, 1361-1417, 1429-1458, 1500-1725, 1740-1790, 1828-1866, 1898-1988, and 2002-2029; these read GGSS…GSSS, LAAR…VLRL, RAGL…PPTA, FLEN…AGVA, GQAF…TPTS, VPPV…QPQA, PWAR…STRH, and RRAP…LPIL. Over residues 1363–1372 the composition is skewed to basic and acidic residues; the sequence is ARERALKESS. Pro residues predominate over residues 1378–1395; the sequence is PQPPPRPPSPRYDAPPPT. A compositionally biased stretch (basic residues) spans 1396-1408; it reads LHHHSPHSPHSPH. Arginine 1429 carries the post-translational modification Omega-N-methylarginine. Residue serine 1442 is modified to Phosphoserine. The segment covering 1530 to 1541 has biased composition (low complexity); it reads RRVLPTSPTSPR. The segment covering 1589-1615 has biased composition (pro residues); it reads PLTPGPPHPLPDPPSPATPLPAAPPPA. Positions 1624–1641 are enriched in polar residues; it reads DSTASSLTSYDSEVATLT. Positions 1648 to 1676 are enriched in pro residues; the sequence is PGDPPAPGPPAPAAPAPPAPQPGPDPPPG. Residues 1684-1694 are compositionally biased toward basic and acidic residues; sequence VDSRSSSDHPL. The span at 1695 to 1708 shows a compositional bias: low complexity; sequence ETISSASTLSSLSA. A compositionally biased stretch (gly residues) spans 1709-1724; it reads EGGGNTGGVAGGGAGV. Over residues 1850-1861 the composition is skewed to pro residues; sequence PGPPPPPLPGPL. Position 1901 is an omega-N-methylarginine (arginine 1901). Composition is skewed to low complexity over residues 1934–1945, 1960–1985, and 2002–2012; these read SQTSLLSKPSSS, TGSG…ASAS, and RRAPSPSLLPA. An omega-N-methylarginine mark is found at arginine 2022, arginine 2042, and arginine 2080. The SAM domain maps to 2104–2167; that stretch reads WTKFDVADWL…DRALKFFLER (64 aa).

Belongs to the SHANK family. In terms of assembly, may homomultimerize via its SAM domain. Interacts with the C-terminus of SSTR2 via the PDZ domain. Interacts with SHARPIN, SPTAN1, HOMER1 and DLGAP1/GKAP. Part of a complex with DLG4/PSD-95 and DLGAP1/GKAP. Interacts with BAIAP2. Interacts with IGSF9. Interacts with HOMER1 and HOMER3. In terms of tissue distribution, in brain, highly expressed in cortex, hippocampus and cerebellum.

Its subcellular location is the cytoplasm. It is found in the synapse. The protein localises to the postsynaptic density. Seems to be an adapter protein in the postsynaptic density (PSD) of excitatory synapses that interconnects receptors of the postsynaptic membrane including NMDA-type and metabotropic glutamate receptors, and the actin-based cytoskeleton. Plays a role in the structural and functional organization of the dendritic spine and synaptic junction. Overexpression promotes maturation of dendritic spines and the enlargement of spine heads via its ability to recruit Homer to postsynaptic sites, and enhances presynaptic function. This chain is SH3 and multiple ankyrin repeat domains protein 1 (Shank1), found in Mus musculus (Mouse).